Consider the following 180-residue polypeptide: ATP synthase subunit delta (180 aa).

The protein belongs to the ATPase delta chain family. F-type ATPases have 2 components, F(1) - the catalytic core - and F(0) - the membrane proton channel. F(1) has five subunits: alpha(3), beta(3), gamma(1), delta(1), epsilon(1). F(0) has three main subunits: a(1), b(2) and c(10-14). The alpha and beta chains form an alternating ring which encloses part of the gamma chain. F(1) is attached to F(0) by a central stalk formed by the gamma and epsilon chains, while a peripheral stalk is formed by the delta and b chains.

The protein localises to the cell inner membrane. Functionally, f(1)F(0) ATP synthase produces ATP from ADP in the presence of a proton or sodium gradient. F-type ATPases consist of two structural domains, F(1) containing the extramembraneous catalytic core and F(0) containing the membrane proton channel, linked together by a central stalk and a peripheral stalk. During catalysis, ATP synthesis in the catalytic domain of F(1) is coupled via a rotary mechanism of the central stalk subunits to proton translocation. In terms of biological role, this protein is part of the stalk that links CF(0) to CF(1). It either transmits conformational changes from CF(0) to CF(1) or is implicated in proton conduction. The sequence is that of ATP synthase subunit delta from Acidovorax sp. (strain JS42).